The following is a 679-amino-acid chain: MIDQYKHQQLRIGSVSPQQIRAWAKKILPNGEIVGEVTKPYTFHYKTNKPEKDGLFCERISGPIKSGICACGNYRGIGTEKEDPKFCEECGVEFVDSRIRRYQMGYIKLTCPVTHVWYLKRLPSYIANLLDKPLRELEGLVYCDFSFARSIAKKPTFLRLRGSFEYEIQSWQYSIPLFFTTQGFETFRNREISTGAGAIREQLADSDLRIITDNSLLEWKELGDEESAGNEWEEKKIRRRKDFLVRRIELAKHFLRTNVDPEWMVLCLLPVLPPELRPIIQIDGGKLMSSDINELYRRVIYRNNTLTDLLATSRSTPGELVMCQEKLVQEAVDTLFDNGIRGQPMRDGHNKVYKSFSDVIEGKEGRFRETLLGKRVDYSGRSVIVVGPLLSLHQCGLPREIAIELFQAFVIRGLIRQDVASNTGIAKSKIREKEPIVWEILQEVMQGHPVLLNRAPTLHRLGIQAFQPILVEGRAICLHPLVCKGFNADFDGDQMAVHVPLSLEAQAEARLLMFSHMNLLSPAIGDPVSVPTQDMLIGLYVLTIGNPRGICANRYNQSNSNCRNYKKEKVYKNDFKYTKELYFSSSYDALGAYRQKRIHLDSPLWLRWRLDQRVVGSREVPIEIQYESFGNYNEIYKHYQIIGSVKIEICCIYIRTTAGHISFYREIEEAIQGFWRAYS.

Zn(2+) is bound by residues C69, C71, C87, and C90. Mg(2+) contacts are provided by D489, D491, and D493.

This sequence belongs to the RNA polymerase beta' chain family. RpoC1 subfamily. As to quaternary structure, in plastids the minimal PEP RNA polymerase catalytic core is composed of four subunits: alpha, beta, beta', and beta''. When a (nuclear-encoded) sigma factor is associated with the core the holoenzyme is formed, which can initiate transcription. Mg(2+) serves as cofactor. Requires Zn(2+) as cofactor.

The protein resides in the plastid. The protein localises to the chloroplast. The enzyme catalyses RNA(n) + a ribonucleoside 5'-triphosphate = RNA(n+1) + diphosphate. Its function is as follows. DNA-dependent RNA polymerase catalyzes the transcription of DNA into RNA using the four ribonucleoside triphosphates as substrates. In Phalaenopsis aphrodite subsp. formosana (Moth orchid), this protein is DNA-directed RNA polymerase subunit beta'.